Here is a 381-residue protein sequence, read N- to C-terminus: Chaperone protein DnaJ (381 aa).

Positions 4–69 constitute a J domain; that stretch reads DYYEILGVTR…QKRAAYDRFG (66 aa). The CR-type zinc finger occupies 135–213; it reads GKTAQINIPS…CQGTRRVEKN (79 aa). The Zn(2+) site is built by Cys148, Cys151, Cys165, Cys168, Cys187, Cys190, Cys201, and Cys204. 4 CXXCXGXG motif repeats span residues 148 to 155, 165 to 172, 187 to 194, and 201 to 208; these read CDACEGSG, CGTCHGAG, CPVCHGRG, and CPKCQGTR.

The protein belongs to the DnaJ family. As to quaternary structure, homodimer. Requires Zn(2+) as cofactor.

Its subcellular location is the cytoplasm. Its function is as follows. Participates actively in the response to hyperosmotic and heat shock by preventing the aggregation of stress-denatured proteins and by disaggregating proteins, also in an autonomous, DnaK-independent fashion. Unfolded proteins bind initially to DnaJ; upon interaction with the DnaJ-bound protein, DnaK hydrolyzes its bound ATP, resulting in the formation of a stable complex. GrpE releases ADP from DnaK; ATP binding to DnaK triggers the release of the substrate protein, thus completing the reaction cycle. Several rounds of ATP-dependent interactions between DnaJ, DnaK and GrpE are required for fully efficient folding. Also involved, together with DnaK and GrpE, in the DNA replication of plasmids through activation of initiation proteins. This is Chaperone protein DnaJ from Bartonella henselae (strain ATCC 49882 / DSM 28221 / CCUG 30454 / Houston 1) (Rochalimaea henselae).